A 431-amino-acid chain; its full sequence is Glutamate-1-semialdehyde 2,1-aminomutase 2 (431 aa).

K268 bears the N6-(pyridoxal phosphate)lysine mark.

It belongs to the class-III pyridoxal-phosphate-dependent aminotransferase family. HemL subfamily. As to quaternary structure, homodimer. It depends on pyridoxal 5'-phosphate as a cofactor.

The protein localises to the cytoplasm. The catalysed reaction is (S)-4-amino-5-oxopentanoate = 5-aminolevulinate. Its pathway is porphyrin-containing compound metabolism; protoporphyrin-IX biosynthesis; 5-aminolevulinate from L-glutamyl-tRNA(Glu): step 2/2. This is Glutamate-1-semialdehyde 2,1-aminomutase 2 from Bacillus licheniformis (strain ATCC 14580 / DSM 13 / JCM 2505 / CCUG 7422 / NBRC 12200 / NCIMB 9375 / NCTC 10341 / NRRL NRS-1264 / Gibson 46).